An 81-amino-acid polypeptide reads, in one-letter code: High-potential iron-sulfur protein (81 aa).

[4Fe-4S] cluster is bound by residues Cys-43, Cys-46, Cys-59, and Cys-73.

This sequence belongs to the high-potential iron-sulfur protein (HiPIP) family. As to quaternary structure, homodimer.

Functionally, specific class of high-redox-potential 4Fe-4S ferredoxins. Functions in anaerobic electron transport in most purple and in some other photosynthetic bacteria and in at least one genus (Paracoccus) of halophilic, denitrifying bacteria. This is High-potential iron-sulfur protein (hip) from Thiococcus pfennigii (Thiocapsa pfennigii).